We begin with the raw amino-acid sequence, 243 residues long: Protein YagJ (243 aa).

This is Protein YagJ (yagJ) from Escherichia coli (strain K12).